The primary structure comprises 568 residues: ATP-dependent RNA helicase MRH4, mitochondrial (568 aa).

The N-terminal 50 residues, 1 to 50, are a transit peptide targeting the mitochondrion; that stretch reads MVSILAIRTFNPLGHFVSTQCVRAYAINSVRAGSKSSSVRAGSKNDTTRA. The segment covering 36 to 49 has biased composition (polar residues); that stretch reads SSSVRAGSKNDTTR. The tract at residues 36-64 is disordered; the sequence is SSSVRAGSKNDTTRASSKKNKAGKSKLQL. The Q motif motif lies at 143-150; that stretch reads EIHPSPIQ. Residues 160 to 348 form the Helicase ATP-binding domain; it reads NLMEPKLQVH…TKMFPNAIPL (189 aa). 173–180 is a binding site for ATP; it reads AETGSGKT. The DEAD box motif lies at 296 to 299; it reads DEAD. One can recognise a Helicase C-terminal domain in the interval 379–568; that stretch reads ALAQTLYAIA…TILKKNKALT (190 aa).

It belongs to the DEAD box helicase family. MRH4 subfamily.

The protein localises to the mitochondrion. The enzyme catalyses ATP + H2O = ADP + phosphate + H(+). Its function is as follows. ATP-binding RNA helicase involved in mitochondrial RNA metabolism. Required for maintenance of mitochondrial DNA. The sequence is that of ATP-dependent RNA helicase MRH4, mitochondrial (MRH4) from Candida glabrata (strain ATCC 2001 / BCRC 20586 / JCM 3761 / NBRC 0622 / NRRL Y-65 / CBS 138) (Yeast).